We begin with the raw amino-acid sequence, 124 residues long: MARVAGVDIPGNKRVEIGLTYICGIGPTRSRHALTAAGISFDTRVKDLTDDQLVALRAHIQNSYRIEGDLRREVASDIRRKVEIGCYQGLRHRRGLPVNGQRTRTNARSSKGPRRTVAGKKKAR.

The segment at G95–R124 is disordered. The segment covering G100–S109 has biased composition (polar residues). The segment covering K111–R124 has biased composition (basic residues).

This sequence belongs to the universal ribosomal protein uS13 family. As to quaternary structure, part of the 30S ribosomal subunit. Forms a loose heterodimer with protein S19. Forms two bridges to the 50S subunit in the 70S ribosome.

Its function is as follows. Located at the top of the head of the 30S subunit, it contacts several helices of the 16S rRNA. In the 70S ribosome it contacts the 23S rRNA (bridge B1a) and protein L5 of the 50S subunit (bridge B1b), connecting the 2 subunits; these bridges are implicated in subunit movement. Contacts the tRNAs in the A and P-sites. This chain is Small ribosomal subunit protein uS13, found in Tropheryma whipplei (strain TW08/27) (Whipple's bacillus).